A 247-amino-acid chain; its full sequence is 2,3-bisphosphoglycerate-dependent phosphoglycerate mutase (247 aa).

Substrate is bound by residues R8 to N15, T21 to G22, R60, E87 to Y90, K98, R114 to R115, and G183 to N184. Residue H9 is the Tele-phosphohistidine intermediate of the active site. E87 acts as the Proton donor/acceptor in catalysis.

It belongs to the phosphoglycerate mutase family. BPG-dependent PGAM subfamily. As to quaternary structure, homodimer.

It carries out the reaction (2R)-2-phosphoglycerate = (2R)-3-phosphoglycerate. Its pathway is carbohydrate degradation; glycolysis; pyruvate from D-glyceraldehyde 3-phosphate: step 3/5. Its function is as follows. Catalyzes the interconversion of 2-phosphoglycerate and 3-phosphoglycerate. This Methylibium petroleiphilum (strain ATCC BAA-1232 / LMG 22953 / PM1) protein is 2,3-bisphosphoglycerate-dependent phosphoglycerate mutase.